Here is a 150-residue protein sequence, read N- to C-terminus: Anthrone oxygenase gedH (150 aa).

4 helical membrane-spanning segments follow: residues 1-21 (MANP…PVFL), 41-61 (GHKL…WVAA), 73-93 (PVLA…CMVS), and 128-148 (LFPL…LVGG).

It belongs to the anthrone oxygenase family.

The protein localises to the membrane. It catalyses the reaction emodin anthrone + O2 = emodin + H2O + H(+). The protein operates within secondary metabolite biosynthesis. Its function is as follows. Anthrone oxygenase; part of the gene cluster that mediates the biosynthesis of geodin, an intermediate in the biosynthesis of other natural products. The pathway begins with the synthesis of atrochrysone thioester by the polyketide synthase (PKS) gedC. The atrochrysone carboxyl ACP thioesterase gedB then breaks the thioester bond and releases the atrochrysone carboxylic acid from gedC. The atrochrysone carboxylic acid is then converted to atrochrysone which is further transformed into emodin anthrone. The next step is performed by the emodin anthrone oxygenase gedH that catalyzes the oxidation of emodinanthrone to emodin. Emodin O-methyltransferase encoded probably by gedA then catalyzes methylation of the 8-hydroxy group of emodin to form questin. Ring cleavage of questin by questin oxidase gedK leads to desmethylsulochrin via several intermediates including questin epoxide. Another methylation step probably catalyzed by methyltransferase gedG leads to the formation of sulochrin which is further converted to dihydrogeodin by the sulochrin halogenase gedL. Finally, the dihydrogeodin oxidase gedJ catalyzes the stereospecific phenol oxidative coupling reaction converting dihydrogeodin to geodin. The polypeptide is Anthrone oxygenase gedH (Aspergillus terreus (strain NIH 2624 / FGSC A1156)).